The following is a 357-amino-acid chain: GDSL esterase/lipase At5g45950 (357 aa).

The first 23 residues, 1-23 (MLLVAFVTLLVAVALQPLPSVLS), serve as a signal peptide directing secretion. An N-linked (GlcNAc...) asparagine glycan is attached at Asn-37. Ser-47 (nucleophile) is an active-site residue. Asn-132 carries an N-linked (GlcNAc...) asparagine glycan. Active-site residues include Asp-331 and His-334.

It belongs to the 'GDSL' lipolytic enzyme family.

It is found in the secreted. In Arabidopsis thaliana (Mouse-ear cress), this protein is GDSL esterase/lipase At5g45950.